The sequence spans 282 residues: Protease HtpX homolog (282 aa).

A run of 2 helical transmembrane segments spans residues 6-26 (TFILMTFLALIFMFFGGLIGG) and 28-48 (QGVIIAFVVALGMNFFSYFFS). Histidine 130 provides a ligand contact to Zn(2+). Residue glutamate 131 is part of the active site. Zn(2+) is bound at residue histidine 134. 2 consecutive transmembrane segments (helical) span residues 140 to 160 (ILIGSVAAVFAGAIAILANFA) and 177 to 197 (ILMIVAAIIMPIAAAIIQMAI). Glutamate 202 is a binding site for Zn(2+).

The protein belongs to the peptidase M48B family. Zn(2+) serves as cofactor.

It localises to the cell inner membrane. This Campylobacter hominis (strain ATCC BAA-381 / DSM 21671 / CCUG 45161 / LMG 19568 / NCTC 13146 / CH001A) protein is Protease HtpX homolog.